Here is a 105-residue protein sequence, read N- to C-terminus: Small ribosomal subunit protein uS17 (105 aa).

Belongs to the universal ribosomal protein uS17 family. Part of the 30S ribosomal subunit. Contacts protein S12.

Functionally, one of the primary rRNA binding proteins, it binds directly to 16S rRNA where it helps nucleate assembly of the platform and body of the 30S subunit by bringing together and stabilizing interactions between several different RNA helices. The combined cluster of proteins S8, S12 and S17 appears to hold together the shoulder and platform of the 30S subunit. This chain is Small ribosomal subunit protein uS17, found in Thermus thermophilus (strain ATCC 27634 / DSM 579 / HB8).